Reading from the N-terminus, the 509-residue chain is MTALVSPAGPEQPSLRVRRLLLHTQHQPVVVMHTDCHVCRSEGLAARSQVLLTNGARQVHATLFQVDGDAVLSHDEVGLSETAWDLLGVAEGDEVRVSHPPALESLASVRRRIYGHRLDAQALSEIVRDVAAGRYTDVHLAAFLTASAALPLDENETADLTGAMIAVGDRMEWDAPTVVDKHCVGGLPGNRTTPIVVAIVAANGLVMPKTSSRAITSPAGTADTMETLAPVDLDLATLRRVVEAEGGCIAWGGAVHLSPADDIFVRVERELDVDTEGQLIASVLSKKISAGSTHVVIDIPVGPTAKVRGEDAASHLASRITAVASRFGLAATCVQTDGSQPVGRGIGPALEAFDVLAVLQNASDAPDDLRRRAATLAGAALEIGRKAGKGEGTALALETLADGRAWKKFEAICEAQGGLRAPPRAAHVHPLVAPRAGRVVHINNRKLSRLAKLAGAPESKAGGVHMDVRLGDEIDRGQPLLHVHAETTGELAYALDYAARAGDIVEIEA.

The protein belongs to the thymidine/pyrimidine-nucleoside phosphorylase family. Type 2 subfamily.

It catalyses the reaction thymidine + phosphate = 2-deoxy-alpha-D-ribose 1-phosphate + thymine. The polypeptide is Putative thymidine phosphorylase (Chelativorans sp. (strain BNC1)).